The primary structure comprises 297 residues: Glucuronoxylan 4-O-methyltransferase 3 (297 aa).

A helical membrane pass occupies residues 9–29 (LNLKVIFIGSSILILIIIYLA). The span at 35–47 (SSSSKPISKTNLS) shows a compositional bias: low complexity. Residues 35–63 (SSSSKPISKTNLSQEEEETQHKQEGCPTT) form a disordered region.

This sequence belongs to the methyltransferase superfamily. In terms of tissue distribution, expressed in hypocotyls, roots, rosette leaves, stems and siliques.

It is found in the golgi apparatus membrane. It catalyses the reaction glucuronoxylan D-glucuronate + n S-adenosyl-L-methionine = glucuronoxylan 4-O-methyl-D-glucuronate + n S-adenosyl-L-homocysteine + n H(+). Functionally, methyltransferase catalyzing 4-O-methylation of glucuronic acid side chains on xylan. This chain is Glucuronoxylan 4-O-methyltransferase 3 (GXM3), found in Arabidopsis thaliana (Mouse-ear cress).